The following is a 491-amino-acid chain: Bifunctional protein HldE (491 aa).

Residues 1-330 (MDRKMVESLF…AAVSLEHRDS (330 aa)) are ribokinase. 205-208 (NRKE) serves as a coordination point for ATP. D275 is an active-site residue. A cytidylyltransferase region spans residues 356–491 (FTNGCFDLLH…KVLERYTDEQ (136 aa)).

The protein in the N-terminal section; belongs to the carbohydrate kinase PfkB family. In the C-terminal section; belongs to the cytidylyltransferase family. Homodimer.

The enzyme catalyses D-glycero-beta-D-manno-heptose 7-phosphate + ATP = D-glycero-beta-D-manno-heptose 1,7-bisphosphate + ADP + H(+). It catalyses the reaction D-glycero-beta-D-manno-heptose 1-phosphate + ATP + H(+) = ADP-D-glycero-beta-D-manno-heptose + diphosphate. It functions in the pathway nucleotide-sugar biosynthesis; ADP-L-glycero-beta-D-manno-heptose biosynthesis; ADP-L-glycero-beta-D-manno-heptose from D-glycero-beta-D-manno-heptose 7-phosphate: step 1/4. The protein operates within nucleotide-sugar biosynthesis; ADP-L-glycero-beta-D-manno-heptose biosynthesis; ADP-L-glycero-beta-D-manno-heptose from D-glycero-beta-D-manno-heptose 7-phosphate: step 3/4. In terms of biological role, catalyzes the phosphorylation of D-glycero-D-manno-heptose 7-phosphate at the C-1 position to selectively form D-glycero-beta-D-manno-heptose-1,7-bisphosphate. Catalyzes the ADP transfer from ATP to D-glycero-beta-D-manno-heptose 1-phosphate, yielding ADP-D-glycero-beta-D-manno-heptose. In Trichlorobacter lovleyi (strain ATCC BAA-1151 / DSM 17278 / SZ) (Geobacter lovleyi), this protein is Bifunctional protein HldE.